A 1544-amino-acid chain; its full sequence is Protein mahjong (1544 aa).

A disordered region spans residues 1 to 110; that stretch reads MSEGSGSENA…AAADRRQATK (110 aa). Residues 10-35 are compositionally biased toward low complexity; sequence AAAAEAAAEAEAATEAALMAEAVAVA. The segment covering 38–91 has biased composition (acidic residues); it reads SDEEEQPEAEDMPEQAGDNQEEDAAEQQDGGEPEADEDADADDAMSVENAENES. Residues Ser565 and Ser569 each carry the phosphoserine modification. The LisH domain maps to 912-944; that stretch reads NKQQLYQLIFEHLESNGLSQTAQMLQREVGLPL. Disordered regions lie at residues 946-973 and 987-1059; these read TPTTRSFHQSPFDYKSLPSGSSSLSRNR and GNGD…LAED. Ser955 is subject to Phosphoserine. Residues 961–971 show a composition bias toward low complexity; that stretch reads SLPSGSSSLSR. Residues 1016–1027 are compositionally biased toward polar residues; it reads PNFSSLNTTQTP. Short sequence motifs (DWD box) lie at residues 1302–1309 and 1338–1345; these read VLWDVRSG and EVWDLRTF. Disordered stretches follow at residues 1447-1475 and 1487-1544; these read KSERSEEEDDEEVPESDEDGSDTGSENTF and LRNL…SSDD. 2 stretches are compositionally biased toward acidic residues: residues 1451–1467 and 1495–1535; these read SEEEDDEEVPESDEDGS and NDDE…DVLE.

It belongs to the VPRBP/DCAF1 family. In terms of assembly, component of the CUL4-RBX1-DDB1-DCAF1 E3 ubiquitin-protein ligase complex. Interacts with l(2)gl.

It localises to the nucleus. It functions in the pathway protein modification; protein ubiquitination. In terms of biological role, probable substrate recognition component of tsome E3 ubiquitin-protein ligase complex. Plays a key role in cell competition via its interaction with l(2)gl. The chain is Protein mahjong (mahj) from Drosophila melanogaster (Fruit fly).